Reading from the N-terminus, the 353-residue chain is Ribosome biogenesis protein BRX1 homolog (353 aa).

Basic residues predominate over residues 1 to 10 (MAATKRKRRG). The disordered stretch occupies residues 1–46 (MAATKRKRRGGFAVQAKKPKRNEIDAEPPAKRHATAEEVEEEERDR). Residues 21–36 (RNEIDAEPPAKRHATA) are compositionally biased toward basic and acidic residues. The 190-residue stretch at 60–249 (ERILIFSSRG…LIKIFQGSFG (190 aa)) folds into the Brix domain. K160 is covalently cross-linked (Glycyl lysine isopeptide (Lys-Gly) (interchain with G-Cter in SUMO2)). A Phosphoserine modification is found at S261. K276 is modified (N6-acetyllysine). Glycyl lysine isopeptide (Lys-Gly) (interchain with G-Cter in SUMO2) cross-links involve residues K314 and K322.

This sequence belongs to the BRX1 family.

The protein localises to the nucleus. Its subcellular location is the nucleolus. Functionally, required for biogenesis of the 60S ribosomal subunit. This is Ribosome biogenesis protein BRX1 homolog (BRIX1) from Homo sapiens (Human).